The primary structure comprises 212 residues: Large ribosomal subunit protein uL3 (212 aa).

Position 153 is an N5-methylglutamine (Q153).

It belongs to the universal ribosomal protein uL3 family. In terms of assembly, part of the 50S ribosomal subunit. Forms a cluster with proteins L14 and L19. Methylated by PrmB.

One of the primary rRNA binding proteins, it binds directly near the 3'-end of the 23S rRNA, where it nucleates assembly of the 50S subunit. This is Large ribosomal subunit protein uL3 from Azoarcus sp. (strain BH72).